Here is a 921-residue protein sequence, read N- to C-terminus: Alanine--tRNA ligase (921 aa).

Positions 602, 606, 706, and 710 each coordinate Zn(2+).

It belongs to the class-II aminoacyl-tRNA synthetase family. It depends on Zn(2+) as a cofactor.

The protein localises to the cytoplasm. It carries out the reaction tRNA(Ala) + L-alanine + ATP = L-alanyl-tRNA(Ala) + AMP + diphosphate. Catalyzes the attachment of alanine to tRNA(Ala) in a two-step reaction: alanine is first activated by ATP to form Ala-AMP and then transferred to the acceptor end of tRNA(Ala). Also edits incorrectly charged Ser-tRNA(Ala) and Gly-tRNA(Ala) via its editing domain. The sequence is that of Alanine--tRNA ligase from Hyperthermus butylicus (strain DSM 5456 / JCM 9403 / PLM1-5).